The chain runs to 164 residues: UPF0114 protein YqhA (164 aa).

3 helical membrane passes run 10–32 (YASRWLLAPVYFGLSLALVALAL), 53–75 (LILVLLSLVDMTLVGGLLVMVMF), and 136–155 (LMWYVIIHLTFVLSAFVMGY).

The protein belongs to the UPF0114 family.

Its subcellular location is the cell membrane. The polypeptide is UPF0114 protein YqhA (Shigella flexneri).